The following is a 388-amino-acid chain: Probable tRNA sulfurtransferase (388 aa).

The THUMP domain occupies 55 to 162 (VTLDDKLKKI…PEGVLIFTDR (108 aa)). ATP contacts are provided by residues 180 to 181 (LL), 205 to 206 (TF), Arg264, Gly286, and Gln295.

Belongs to the ThiI family.

Its subcellular location is the cytoplasm. It catalyses the reaction [ThiI sulfur-carrier protein]-S-sulfanyl-L-cysteine + a uridine in tRNA + 2 reduced [2Fe-2S]-[ferredoxin] + ATP + H(+) = [ThiI sulfur-carrier protein]-L-cysteine + a 4-thiouridine in tRNA + 2 oxidized [2Fe-2S]-[ferredoxin] + AMP + diphosphate. It carries out the reaction [ThiS sulfur-carrier protein]-C-terminal Gly-Gly-AMP + S-sulfanyl-L-cysteinyl-[cysteine desulfurase] + AH2 = [ThiS sulfur-carrier protein]-C-terminal-Gly-aminoethanethioate + L-cysteinyl-[cysteine desulfurase] + A + AMP + 2 H(+). It functions in the pathway cofactor biosynthesis; thiamine diphosphate biosynthesis. Catalyzes the ATP-dependent transfer of a sulfur to tRNA to produce 4-thiouridine in position 8 of tRNAs, which functions as a near-UV photosensor. Also catalyzes the transfer of sulfur to the sulfur carrier protein ThiS, forming ThiS-thiocarboxylate. This is a step in the synthesis of thiazole, in the thiamine biosynthesis pathway. The sulfur is donated as persulfide by IscS. The sequence is that of Probable tRNA sulfurtransferase from Thermotoga maritima (strain ATCC 43589 / DSM 3109 / JCM 10099 / NBRC 100826 / MSB8).